The primary structure comprises 319 residues: Annexin D4 (319 aa).

2 Annexin repeats span residues 1 to 75 and 86 to 157; these read MALP…EFSR and HPWE…GLVS. Ca(2+)-binding residues include glycine 19, glycine 21, and glutamate 72. Threonine 115 is subject to Phosphothreonine. Residues tyrosine 159 and tyrosine 211 each carry the phosphotyrosine modification. Annexin repeat units lie at residues 169–240 and 241–316; these read DSAK…ICLL and KPAL…TLLS. Serine 277 is modified (phosphoserine). Position 287 is a phosphotyrosine (tyrosine 287).

The protein belongs to the annexin (TC 1.A.31.1) family. Expressed mainly in roots and flowers. Lower in stems and leaves.

May be involved in osmotic stress and abscisic acid signaling in a calcium-dependent manner. The protein is Annexin D4 (ANN4) of Arabidopsis thaliana (Mouse-ear cress).